The primary structure comprises 557 residues: Hydroxylamine reductase (557 aa).

Residues C4, C7, C19, and C26 each contribute to the [4Fe-4S] cluster site. Positions 253, 277, 321, 408, 436, 461, 495, and 497 each coordinate hybrid [4Fe-2O-2S] cluster. C408 is modified (cysteine persulfide).

The protein belongs to the HCP family. The cofactor is [4Fe-4S] cluster. Requires hybrid [4Fe-2O-2S] cluster as cofactor.

It localises to the cytoplasm. It carries out the reaction A + NH4(+) + H2O = hydroxylamine + AH2 + H(+). Functionally, catalyzes the reduction of hydroxylamine to form NH(3) and H(2)O. The protein is Hydroxylamine reductase of Acidithiobacillus ferrooxidans (strain ATCC 53993 / BNL-5-31) (Leptospirillum ferrooxidans (ATCC 53993)).